Here is a 717-residue protein sequence, read N- to C-terminus: ATP-dependent RNA helicase homolog DQX1 (717 aa).

The Helicase ATP-binding domain occupies 57-225 (QLESNPTGVV…WGNPPIVHIP (169 aa)). 70-77 (GEPGSGKS) contacts ATP. A DEAQ box motif is present at residues 170–173 (DEAQ). A Helicase C-terminal domain is found at 248 to 447 (ACQAVLELCR…ALMQALEDLD (200 aa)). The interval 694–717 (GMADSTAGSKSSSAQEFRDPCVLQ) is disordered. A compositionally biased stretch (polar residues) spans 699–708 (TAGSKSSSAQ).

The protein resides in the nucleus. In terms of biological role, might be involved in RNA metabolism; it is missing helicase motif III and may not have helicase activity. The polypeptide is ATP-dependent RNA helicase homolog DQX1 (DQX1) (Homo sapiens (Human)).